The primary structure comprises 571 residues: Proline--tRNA ligase (571 aa).

This sequence belongs to the class-II aminoacyl-tRNA synthetase family. ProS type 1 subfamily. Homodimer.

The protein localises to the cytoplasm. It carries out the reaction tRNA(Pro) + L-proline + ATP = L-prolyl-tRNA(Pro) + AMP + diphosphate. Its function is as follows. Catalyzes the attachment of proline to tRNA(Pro) in a two-step reaction: proline is first activated by ATP to form Pro-AMP and then transferred to the acceptor end of tRNA(Pro). As ProRS can inadvertently accommodate and process non-cognate amino acids such as alanine and cysteine, to avoid such errors it has two additional distinct editing activities against alanine. One activity is designated as 'pretransfer' editing and involves the tRNA(Pro)-independent hydrolysis of activated Ala-AMP. The other activity is designated 'posttransfer' editing and involves deacylation of mischarged Ala-tRNA(Pro). The misacylated Cys-tRNA(Pro) is not edited by ProRS. In Syntrophotalea carbinolica (strain DSM 2380 / NBRC 103641 / GraBd1) (Pelobacter carbinolicus), this protein is Proline--tRNA ligase.